The chain runs to 247 residues: Phosphoribosylaminoimidazole-succinocarboxamide synthase (247 aa).

Belongs to the SAICAR synthetase family.

It catalyses the reaction 5-amino-1-(5-phospho-D-ribosyl)imidazole-4-carboxylate + L-aspartate + ATP = (2S)-2-[5-amino-1-(5-phospho-beta-D-ribosyl)imidazole-4-carboxamido]succinate + ADP + phosphate + 2 H(+). Its pathway is purine metabolism; IMP biosynthesis via de novo pathway; 5-amino-1-(5-phospho-D-ribosyl)imidazole-4-carboxamide from 5-amino-1-(5-phospho-D-ribosyl)imidazole-4-carboxylate: step 1/2. The polypeptide is Phosphoribosylaminoimidazole-succinocarboxamide synthase (Methanopyrus kandleri (strain AV19 / DSM 6324 / JCM 9639 / NBRC 100938)).